The chain runs to 367 residues: Anhydro-N-acetylmuramic acid kinase (367 aa).

Residue 10 to 17 participates in ATP binding; the sequence is GTSLDGVD.

This sequence belongs to the anhydro-N-acetylmuramic acid kinase family.

The enzyme catalyses 1,6-anhydro-N-acetyl-beta-muramate + ATP + H2O = N-acetyl-D-muramate 6-phosphate + ADP + H(+). Its pathway is amino-sugar metabolism; 1,6-anhydro-N-acetylmuramate degradation. The protein operates within cell wall biogenesis; peptidoglycan recycling. In terms of biological role, catalyzes the specific phosphorylation of 1,6-anhydro-N-acetylmuramic acid (anhMurNAc) with the simultaneous cleavage of the 1,6-anhydro ring, generating MurNAc-6-P. Is required for the utilization of anhMurNAc either imported from the medium or derived from its own cell wall murein, and thus plays a role in cell wall recycling. The protein is Anhydro-N-acetylmuramic acid kinase of Aliivibrio fischeri (strain ATCC 700601 / ES114) (Vibrio fischeri).